A 399-amino-acid polypeptide reads, in one-letter code: Elongation factor Tu (399 aa).

The region spanning 10 to 209 (KPHVNIGTIG…EVDAYIPTPE (200 aa)) is the tr-type G domain. The segment at 19-26 (GHVDHGKT) is G1. Residue 19–26 (GHVDHGKT) coordinates GTP. Residue T26 coordinates Mg(2+). Residues 60-64 (GITIA) form a G2 region. The G3 stretch occupies residues 81–84 (DCPG). GTP is bound by residues 81 to 85 (DCPGH) and 136 to 139 (NKQD). The tract at residues 136-139 (NKQD) is G4. Positions 174–176 (SAL) are G5.

The protein belongs to the TRAFAC class translation factor GTPase superfamily. Classic translation factor GTPase family. EF-Tu/EF-1A subfamily. In terms of assembly, monomer.

It is found in the cytoplasm. The enzyme catalyses GTP + H2O = GDP + phosphate + H(+). GTP hydrolase that promotes the GTP-dependent binding of aminoacyl-tRNA to the A-site of ribosomes during protein biosynthesis. The chain is Elongation factor Tu from Helicobacter pylori (strain G27).